A 123-amino-acid polypeptide reads, in one-letter code: NADH-quinone oxidoreductase subunit A (123 aa).

Helical transmembrane passes span 6-26 (LTPY…AMLI), 66-86 (VVAL…PWAV), and 93-113 (WFGY…LIYI).

Belongs to the complex I subunit 3 family. In terms of assembly, NDH-1 is composed of 14 different subunits. Subunits NuoA, H, J, K, L, M, N constitute the membrane sector of the complex.

Its subcellular location is the cell inner membrane. It carries out the reaction a quinone + NADH + 5 H(+)(in) = a quinol + NAD(+) + 4 H(+)(out). In terms of biological role, NDH-1 shuttles electrons from NADH, via FMN and iron-sulfur (Fe-S) centers, to quinones in the respiratory chain. The immediate electron acceptor for the enzyme in this species is believed to be ubiquinone. Couples the redox reaction to proton translocation (for every two electrons transferred, four hydrogen ions are translocated across the cytoplasmic membrane), and thus conserves the redox energy in a proton gradient. The polypeptide is NADH-quinone oxidoreductase subunit A (Myxococcus xanthus (strain DK1622)).